We begin with the raw amino-acid sequence, 545 residues long: DNA-binding protein REPIN1 (545 aa).

Residues 1-50 (MLEQRCRGPTAMGPAQPWLFSGPSQESSQPDRGLRYQGKSAQPRGQTPGK) form a disordered region. A Phosphoserine modification is found at Ser27. Lys39 bears the N6-acetyllysine mark. A C2H2-type 1; atypical zinc finger spans residues 52-74 (HRCAHCRKRFPGWVALWLHARRC). 2 consecutive C2H2-type zinc fingers follow at residues 80-102 (LPCH…LQVH) and 111-133 (FICH…LRAH). The segment at 140–162 (ITCPECDRRFWRQKQLRAHLRRC) adopts a C2H2-type 4; atypical zinc-finger fold. 11 consecutive C2H2-type zinc fingers follow at residues 172 to 194 (FICG…KRVH), 229 to 251 (FQCA…RRVH), 257 to 279 (HQCP…RRIH), 285 to 307 (YPCT…SKIH), 353 to 375 (HSCS…QRQH), 381 to 403 (FACT…SRVH), 409 to 431 (FACE…RRDH), 437 to 459 (FVCP…RRIH), 465 to 487 (YVCP…RRIH), 493 to 515 (YACP…RKSH), and 521 to 543 (FCCA…QKKH). Lys269 bears the N6-acetyllysine mark.

In terms of assembly, homodimers and homomultimers. Found in a complex with RIP60 and RIP100.

The protein resides in the nucleus. Its subcellular location is the cytoplasm. It localises to the cytosol. In terms of biological role, sequence-specific double-stranded DNA-binding protein. Binds ATT-rich and T-rich DNA sequences and facilitates DNA bending. May regulate the expression of genes involved in cellular fatty acid import, including SCARB1/CD36, and genes involved in lipid droplet formation. May regulate the expression of LCN2, and thereby influence iron metabolism and apoptosis-related pathways. May regulate the expression of genes involved in glucose transport. The sequence is that of DNA-binding protein REPIN1 (Repin1) from Mus musculus (Mouse).